We begin with the raw amino-acid sequence, 46 residues long: Iota-conotoxin RXIA (46 aa).

Residues Pro-2 and Pro-11 each carry the 4-hydroxyproline; partial modification. Disulfide bonds link Cys-5/Cys-19, Cys-12/Cys-22, Cys-18/Cys-27, and Cys-21/Cys-38. Pro-29 carries the 4-hydroxyproline modification. Position 44 is a D-phenylalanine (Phe-44).

It belongs to the conotoxin I1 superfamily. In terms of processing, the natural D-Phe-44 form of the peptide is more potent than the L-Phe-44 form. As to expression, expressed by the venom duct.

Its subcellular location is the secreted. Its function is as follows. Iota-conotoxins bind to voltage-gated sodium channels and act as agonists by shifting the voltage-dependence of activation to more hyperpolarized levels. This toxin acts on Nav1.6/SCN8A &gt; Nav1.2/SCN2A &gt; Nav1.7/SCN9A sodium channels. Produces general excitatory symptoms upon intracorporeal injection and repetitive action potentials in the frog cutaneous pectoris muscle. Natural peptide (with D-Phe) is active on nerve, but not on muscle. Synthetic peptide (with L-Phe) is not active on both nerve and muscle. This chain is Iota-conotoxin RXIA, found in Conus radiatus (Rayed cone).